Consider the following 424-residue polypeptide: Serine--tRNA ligase (424 aa).

231-233 serves as a coordination point for L-serine; the sequence is TAE. Position 262-264 (262-264) interacts with ATP; sequence RSE. L-serine is bound at residue Glu-285. 349–352 provides a ligand contact to ATP; sequence EISS. Residue Ser-385 participates in L-serine binding.

This sequence belongs to the class-II aminoacyl-tRNA synthetase family. Type-1 seryl-tRNA synthetase subfamily. As to quaternary structure, homodimer. The tRNA molecule binds across the dimer.

The protein resides in the cytoplasm. It carries out the reaction tRNA(Ser) + L-serine + ATP = L-seryl-tRNA(Ser) + AMP + diphosphate + H(+). It catalyses the reaction tRNA(Sec) + L-serine + ATP = L-seryl-tRNA(Sec) + AMP + diphosphate + H(+). It functions in the pathway aminoacyl-tRNA biosynthesis; selenocysteinyl-tRNA(Sec) biosynthesis; L-seryl-tRNA(Sec) from L-serine and tRNA(Sec): step 1/1. Functionally, catalyzes the attachment of serine to tRNA(Ser). Is also able to aminoacylate tRNA(Sec) with serine, to form the misacylated tRNA L-seryl-tRNA(Sec), which will be further converted into selenocysteinyl-tRNA(Sec). The chain is Serine--tRNA ligase from Bacillus cereus (strain AH187).